Here is a 546-residue protein sequence, read N- to C-terminus: MATTQAQIQRPIANFSPSLWGDQFIKNDPGAKAAEKHCKAVEELKKEVMNMITAAGSNLVEAMNLIDTLERLGISYHFEKEIDQKLKHFFNLNKDYSDESYDLYTVSLHFRLFRQHGHRISSDIFGRWIDESGKFKEGLKTDGKGLLSLYEASYLRTRGETILDDALEFATATLNSIAPHLESPLSKQVVHALIQPLHYGNPRIEAHNFISIYEENQDKNEFLLRFAKLDYNLLQMLHKEELNEVSRWWKELDLVSKLPYARDRVVECFFWAMGVYHEPQYSRARIMLTKTITMTSIIDDTYDAYGVIEELDIFTEAIERWNMEEMKKLPEYIQPFYKALLELYEQFEEELAEEGRSYAAHYAIESLKELVRSYHVEAKWFIQGYLPPFEEYLKNALITCTYCYHTTTSLLGVESAVEEDFEWLANKPKMLVAGLLICRVIDDIATYEVEKERGQSATGIESYMRDNNATIEEAVAKFFEIATDAWKDINEECLMPSPYSRDVLMRILNLERIIDVTYKGNEDGYTQPEKVLKPHIIALFVDPIKM.

Residues Asp-299, Asp-303, Asp-442, Thr-446, and Glu-450 each coordinate Mg(2+). The DDXXD motif motif lies at 299–303; sequence DDTYD.

Belongs to the terpene synthase family. Tpsa subfamily. In terms of assembly, monomer. Requires Mg(2+) as cofactor. As to expression, highly expressed in leaves and at lower levels in flowers.

It catalyses the reaction (2E,6E)-farnesyl diphosphate = (-)-5-epi-eremophilene + diphosphate. It functions in the pathway secondary metabolite biosynthesis; terpenoid biosynthesis. Its function is as follows. Sesquiterpene synthase that catalyzes the conversion of farnesyl diphosphate to (-)-5-epi-eremophilene. The polypeptide is (-)-5-epieremophilene synthase STPS1 (Salvia miltiorrhiza (Chinese sage)).